Here is an 887-residue protein sequence, read N- to C-terminus: Pre-mRNA-splicing factor cwf22 (887 aa).

The disordered stretch occupies residues 1–27 (MEKEDKSFGIGMLDYNRENPESSGHSR). The MIF4G domain maps to 124–307 (KKSINGLINK…EVLFQTRKDK (184 aa)). Residues 366–401 (ILGEEDDDENEEDEEDSEETSESEEDESVNDEKPQV) are disordered. The span at 368–394 (GEEDDDENEEDEEDSEETSESEEDESV) shows a compositional bias: acidic residues. One can recognise an MI domain in the interval 411–527 (NLRKSIYLTI…GWEVYDCVRL (117 aa)). Disordered regions lie at residues 607–834 (MPKS…KTYH) and 867–887 (GELY…PRAD). Over residues 618 to 662 (EGYSSGSETGSTYSSSYSSTYSRGRSYSRSTRSYSKSRSYSRSRS) the composition is skewed to low complexity. Phosphoserine is present on serine 662. Threonine 664 bears the Phosphothreonine mark. Residues 677–690 (KDRELSPRGRERSS) show a composition bias toward basic and acidic residues. The segment covering 691 to 712 (NRNSYSDLSRSSSLSRGRSRSY) has biased composition (low complexity). Residues 717–726 (RLIESEDKGY) show a composition bias toward basic and acidic residues. Residues 736–746 (RKYRSRQRYRR) are compositionally biased toward basic residues. Composition is skewed to low complexity over residues 747-762 (SYAG…SRSP) and 769-791 (SMSC…SRSP). The segment covering 799–809 (DSLSYNRQYSP) has biased composition (polar residues).

Belongs to the CWC22 family. In terms of assembly, belongs to the 40S cdc5-associated complex (or cwf complex), a spliceosome sub-complex reminiscent of a late-stage spliceosome composed of the U2, U5 and U6 snRNAs and at least brr2, cdc5, cwf2/prp3, cwf3/syf1, cwf4/syf3, cwf5/ecm2, spp42/cwf6, cwf7/spf27, cwf8, cwf9, cwf10, cwf11, cwf12, prp45/cwf13, cwf14, cwf15, cwf16, cwf17, cwf18, cwf19, cwf20, cwf21, cwf22, cwf23, cwf24, cwf25, cwf26, cyp7/cwf27, cwf28, cwf29/ist3, lea1, msl1, prp5/cwf1, prp10, prp12/sap130, prp17, prp22, sap61, sap62, sap114, sap145, slu7, smb1, smd1, smd3, smf1, smg1 and syf2.

Its subcellular location is the cytoplasm. It is found in the nucleus. In terms of biological role, may be involved in pre-mRNA splicing. This is Pre-mRNA-splicing factor cwf22 (cwf22) from Schizosaccharomyces pombe (strain 972 / ATCC 24843) (Fission yeast).